A 319-amino-acid polypeptide reads, in one-letter code: Phospho-N-acetylmuramoyl-pentapeptide-transferase (319 aa).

The next 9 helical transmembrane spans lie at 5–25 (LIAFMISLVLSALLFPWLIIW), 51–71 (TMGGTVFVLSAAVATVAICAY), 79–99 (VWILLVALLGYGIIGFLDDGL), 119–139 (LLVAAGIVLLAASDNFDFALY), 149–169 (VVLFTLFEVFWLVGFSNAVNL), 173–193 (LDGLATGLSFIAYGTYAWLAF), 197–217 (NFGVLVFCMAVMGGLAAFFMF), 224–246 (IFMGDAGSLALGGGLAAVSIFLG), and 299–319 (VDLVFWLVGLVGSGIYLMIWG).

It belongs to the glycosyltransferase 4 family. MraY subfamily. Requires Mg(2+) as cofactor.

The protein localises to the cell membrane. The enzyme catalyses UDP-N-acetyl-alpha-D-muramoyl-L-alanyl-gamma-D-glutamyl-L-lysyl-D-alanyl-D-alanine + di-trans,octa-cis-undecaprenyl phosphate = Mur2Ac(oyl-L-Ala-gamma-D-Glu-L-Lys-D-Ala-D-Ala)-di-trans,octa-cis-undecaprenyl diphosphate + UMP. Its pathway is cell wall biogenesis; peptidoglycan biosynthesis. Its function is as follows. Catalyzes the initial step of the lipid cycle reactions in the biosynthesis of the cell wall peptidoglycan: transfers peptidoglycan precursor phospho-MurNAc-pentapeptide from UDP-MurNAc-pentapeptide onto the lipid carrier undecaprenyl phosphate, yielding undecaprenyl-pyrophosphoryl-MurNAc-pentapeptide, known as lipid I. The sequence is that of Phospho-N-acetylmuramoyl-pentapeptide-transferase from Lactobacillus delbrueckii subsp. bulgaricus (strain ATCC BAA-365 / Lb-18).